The primary structure comprises 153 residues: FAD synthase (153 aa).

ATP-binding positions include 9-10 (TF), 14-17 (HPGH), aspartate 97, and tyrosine 124.

It belongs to the archaeal FAD synthase family. As to quaternary structure, homodimer. It depends on a divalent metal cation as a cofactor.

It catalyses the reaction FMN + ATP + H(+) = FAD + diphosphate. Its pathway is cofactor biosynthesis; FAD biosynthesis; FAD from FMN: step 1/1. In terms of biological role, catalyzes the transfer of the AMP portion of ATP to flavin mononucleotide (FMN) to produce flavin adenine dinucleotide (FAD) coenzyme. In Methanobrevibacter smithii (strain ATCC 35061 / DSM 861 / OCM 144 / PS), this protein is FAD synthase.